Here is a 352-residue protein sequence, read N- to C-terminus: Outer membrane protein assembly factor BamC (352 aa).

An N-terminal signal peptide occupies residues 1–24 (MAISLQKSTVVKVVGVSLVMLLAA). Cysteine 25 carries the N-palmitoyl cysteine lipid modification. A lipid anchor (S-diacylglycerol cysteine) is attached at cysteine 25.

This sequence belongs to the BamC family. Part of the Bam complex, which is composed of the outer membrane protein BamA, and four lipoproteins BamB, BamC, BamD and BamE.

Its subcellular location is the cell outer membrane. Functionally, part of the outer membrane protein assembly complex, which is involved in assembly and insertion of beta-barrel proteins into the outer membrane. This is Outer membrane protein assembly factor BamC from Yersinia pestis.